The following is a 351-amino-acid chain: Flagellin (351 aa).

It belongs to the bacterial flagellin family.

The protein localises to the secreted. Its subcellular location is the bacterial flagellum. In terms of biological role, flagellin is the subunit protein which polymerizes to form the filaments of bacterial flagella. This is Flagellin (fliC) from Serratia marcescens.